The sequence spans 394 residues: MAAETFLFTSESVNEGHPDKLCDQVSDAVLDACLAQDADSKVACETVTKTNMVMVLGEITTKATVDYEKIVRDTCRNIGFISDDVGLDADRCKVLVNIEQQSPDIAQGVHGHFTKRPEEVGAGDQGIMFGYATDETPELMPLSHVLATKLGARLTEVRKNGTCAWVRPDGKTQVTVEYLNEDGAMVPVRVHTVLISTQHDETVTNDEIAADLKEHVIKPVIPAKYLDENTIFHLNPSGRFVIGGPHGDAGLTGRKIIIDTYGGWGAHGGGAFSGKDPTKVDRSGAYIARQAAKSIIASGLARRCIVQISYAIGVPEPLSVFVDSYGTGKIPDREILKLVKENFDFRPGMISINLDLKKGGNRFIKTAAYGHFGRDDADFTWEVVKPLKFDKASA.

Glu11 is a Mg(2+) binding site. His17 lines the ATP pocket. Glu45 is a K(+) binding site. Glu58 and Gln101 together coordinate L-methionine. Residues 169–171 (DGK), 237–240 (SGRF), Asp248, 254–255 (RK), Ala271, Lys275, and Lys279 contribute to the ATP site. Asp248 lines the L-methionine pocket. Position 279 (Lys279) interacts with L-methionine.

The protein belongs to the AdoMet synthase family. In terms of assembly, homotetramer. It depends on Mn(2+) as a cofactor. Mg(2+) is required as a cofactor. The cofactor is Co(2+). K(+) serves as cofactor.

Its subcellular location is the cytoplasm. The enzyme catalyses L-methionine + ATP + H2O = S-adenosyl-L-methionine + phosphate + diphosphate. It participates in amino-acid biosynthesis; S-adenosyl-L-methionine biosynthesis; S-adenosyl-L-methionine from L-methionine: step 1/1. Functionally, catalyzes the formation of S-adenosylmethionine from methionine and ATP. The reaction comprises two steps that are both catalyzed by the same enzyme: formation of S-adenosylmethionine (AdoMet) and triphosphate, and subsequent hydrolysis of the triphosphate. The protein is S-adenosylmethionine synthase 3 (SAM3) of Hordeum vulgare (Barley).